The chain runs to 697 residues: Elongation factor G (697 aa).

The tr-type G domain maps to 8–282 (EDYRNIGIMA…AIVDYLPSPL (275 aa)). GTP is bound by residues 17 to 24 (AHIDAGKT), 81 to 85 (DTPGH), and 135 to 138 (NKMD).

Belongs to the TRAFAC class translation factor GTPase superfamily. Classic translation factor GTPase family. EF-G/EF-2 subfamily.

It localises to the cytoplasm. Its function is as follows. Catalyzes the GTP-dependent ribosomal translocation step during translation elongation. During this step, the ribosome changes from the pre-translocational (PRE) to the post-translocational (POST) state as the newly formed A-site-bound peptidyl-tRNA and P-site-bound deacylated tRNA move to the P and E sites, respectively. Catalyzes the coordinated movement of the two tRNA molecules, the mRNA and conformational changes in the ribosome. This chain is Elongation factor G, found in Metamycoplasma arthritidis (strain 158L3-1) (Mycoplasma arthritidis).